Consider the following 323-residue polypeptide: ADP-L-glycero-D-manno-heptose-6-epimerase (323 aa).

NADP(+) is bound by residues 10–11 (FI), 31–32 (DN), Lys38, Arg53, 75–79 (MGACS), and Asn92. Residue Tyr143 is the Proton acceptor of the active site. Lys147 is a binding site for NADP(+). Position 170 (Asn170) interacts with substrate. The NADP(+) site is built by Val171 and Lys179. Catalysis depends on Lys179, which acts as the Proton acceptor. Substrate-binding positions include Asp181, Lys188, 202–205 (FRSC), Arg216, and Tyr281.

It belongs to the NAD(P)-dependent epimerase/dehydratase family. HldD subfamily. Homopentamer. NADP(+) is required as a cofactor.

It carries out the reaction ADP-D-glycero-beta-D-manno-heptose = ADP-L-glycero-beta-D-manno-heptose. The protein operates within nucleotide-sugar biosynthesis; ADP-L-glycero-beta-D-manno-heptose biosynthesis; ADP-L-glycero-beta-D-manno-heptose from D-glycero-beta-D-manno-heptose 7-phosphate: step 4/4. Functionally, catalyzes the interconversion between ADP-D-glycero-beta-D-manno-heptose and ADP-L-glycero-beta-D-manno-heptose via an epimerization at carbon 6 of the heptose. The protein is ADP-L-glycero-D-manno-heptose-6-epimerase of Nitratidesulfovibrio vulgaris (strain ATCC 29579 / DSM 644 / CCUG 34227 / NCIMB 8303 / VKM B-1760 / Hildenborough) (Desulfovibrio vulgaris).